Consider the following 279-residue polypeptide: Prohibitin-4, mitochondrial (279 aa).

An N-acetylglycine modification is found at Gly2. The Mitochondrial matrix portion of the chain corresponds to 2-6 (GSQQV). A helical; Signal-anchor for type II membrane protein transmembrane segment spans residues 7-28 (AISFLTNLAKAAFGLGVAATAL). Topologically, residues 29–279 (NSSLYTVDGG…SMLFNLNPGR (251 aa)) are mitochondrial intermembrane.

Belongs to the prohibitin family. As to quaternary structure, component of a prohibitin multimeric complex in mitochondrial membranes. Mostly expressed in proliferative tissues, including vasculature, shoot and root apical tissues. Accumulates in dry seeds.

It localises to the mitochondrion inner membrane. Prohibitin probably acts as a holdase/unfoldase for the stabilization of newly synthesized mitochondrial proteins. In Arabidopsis thaliana (Mouse-ear cress), this protein is Prohibitin-4, mitochondrial (PHB4).